The primary structure comprises 252 residues: Small ribosomal subunit protein eS1 (252 aa).

It belongs to the eukaryotic ribosomal protein eS1 family. In terms of assembly, component of the small ribosomal subunit. Mature ribosomes consist of a small (40S) and a large (60S) subunit. The 40S subunit contains about 33 different proteins and 1 molecule of RNA (18S). The 60S subunit contains about 49 different proteins and 3 molecules of RNA (25S, 5.8S and 5S).

The protein resides in the cytoplasm. In Enterocytozoon bieneusi (strain H348) (Microsporidian parasite), this protein is Small ribosomal subunit protein eS1.